The primary structure comprises 127 residues: Small ribosomal subunit protein uS13 (127 aa).

The protein belongs to the universal ribosomal protein uS13 family. Part of the 30S ribosomal subunit. Forms a loose heterodimer with protein S19. Forms two bridges to the 50S subunit in the 70S ribosome.

Located at the top of the head of the 30S subunit, it contacts several helices of the 16S rRNA. In the 70S ribosome it contacts the 23S rRNA (bridge B1a) and protein L5 of the 50S subunit (bridge B1b), connecting the 2 subunits; these bridges are implicated in subunit movement. Contacts the tRNAs in the A and P-sites. The polypeptide is Small ribosomal subunit protein uS13 (Pelagibacter ubique (strain HTCC1062)).